Consider the following 382-residue polypeptide: Gap junction alpha-1 protein (382 aa).

The Cytoplasmic portion of the chain corresponds to 2 to 23 (GDWSALGKLLDKVQAYSTAGGK). Residue S5 is modified to Phosphoserine. The chain crosses the membrane as a helical span at residues 24 to 44 (VWLSVLFIFRILLLGTAVESA). Topologically, residues 45–76 (WGDEQSAFRCNTQQPGCENVCYDKSFPISHVR) are extracellular. Disulfide bonds link C54/C192 and C187/C198. Residues 77–97 (FWVLQIIFVSVPTLLYLAHVF) traverse the membrane as a helical segment. Residues 98-155 (YVMRKEEKLNKKEEELKVAQTDGVNVEMHLKQIEIKKFKYGIEEHGKVKMRGGLLRTY) lie on the Cytoplasmic side of the membrane. K144 is covalently cross-linked (Glycyl lysine isopeptide (Lys-Gly) (interchain with G-Cter in SUMO)). Residues 156–176 (IISILFKSIFEVAFLLIQWYI) form a helical membrane-spanning segment. The Extracellular segment spans residues 177-207 (YGFSLSAVYTCKRDPCPHQVDCFLSRPTEKT). The helical transmembrane segment at 208–228 (IFIIFMLVVSLVSLALNIIEL) threads the bilayer. Over 229–382 (FYVFFKGVKD…SRPRPDDLEI (154 aa)) the chain is Cytoplasmic. K237 participates in a covalent cross-link: Glycyl lysine isopeptide (Lys-Gly) (interchain with G-Cter in SUMO). The interval 244–382 (SDPYHATSGA…SRPRPDDLEI (139 aa)) is interaction with NOV. Position 247 is a phosphotyrosine (Y247). Residues S255 and S262 each carry the phosphoserine modification. An interaction with UBQLN4 region spans residues 264–382 (KYAYFNGCSS…SRPRPDDLEI (119 aa)). An S-nitrosocysteine modification is found at C271. Residue T275 is modified to Phosphothreonine. The segment at 279-300 (SPMSPPGYKPVTGDRNNSSCRN) is disordered. 2 positions are modified to phosphoserine: S306 and S314. Residues 317-332 (QNRMGQAGSTISNSHA) are compositionally biased toward polar residues. Residues 317 to 382 (QNRMGQAGST…SRPRPDDLEI (66 aa)) are disordered. S325 carries the phosphoserine; by CK1 modification. T326 bears the Phosphothreonine mark. Residues S328 and S330 each carry the phosphoserine; by CK1 modification. Phosphoserine is present on residues S344 and S365. The segment covering 362 to 374 (RPSSRASSRASSR) has biased composition (low complexity). Phosphoserine; by PKC/PRKCG and PKC/PRKCD is present on S368. Residues S369 and S373 each carry the phosphoserine modification.

It belongs to the connexin family. Alpha-type (group II) subfamily. As to quaternary structure, a connexon is composed of a hexamer of connexins. Interacts with SGSM3. Interacts with RIC1/CIP150. Interacts with CNST and CSNK1D. Interacts (via C-terminus) with TJP1. Interacts (via C-terminus) with SRC (via SH3 domain). Interacts (not ubiquitinated) with UBQLN4 (via UBA domain). Interacts with NOV. Interacts with TMEM65. Interacts with ANK3/ANKG and PKP2. In terms of processing, phosphorylation at Ser-325, Ser-328 and Ser-330 by CK1 modulates gap junction assembly. Phosphorylated at Ser-368 by PRKCG; phosphorylation induces disassembly of gap junction plaques and inhibition of gap junction activity. Phosphorylation at Ser-368 by PRKCD triggers its internalization into small vesicles leading to proteasome-mediated degradation. Post-translationally, sumoylated with SUMO1, SUMO2 and SUMO3, which may regulate the level of functional Cx43 gap junctions at the plasma membrane. May be desumoylated by SENP1 or SENP2. S-nitrosylation at Cys-271 is enriched at the muscle endothelial gap junction in arteries, it augments channel permeability and may regulate of smooth muscle cell to endothelial cell communication. In terms of processing, acetylated in the developing cortex; leading to delocalization from the cell membrane.

Its subcellular location is the cell membrane. The protein resides in the cell junction. The protein localises to the gap junction. It localises to the endoplasmic reticulum. In terms of biological role, gap junction protein that acts as a regulator of bladder capacity. A gap junction consists of a cluster of closely packed pairs of transmembrane channels, the connexons, through which materials of low MW diffuse from one cell to a neighboring cell. May play a critical role in the physiology of hearing by participating in the recycling of potassium to the cochlear endolymph. Negative regulator of bladder functional capacity: acts by enhancing intercellular electrical and chemical transmission, thus sensitizing bladder muscles to cholinergic neural stimuli and causing them to contract. May play a role in cell growth inhibition through the regulation of NOV expression and localization. Plays an essential role in gap junction communication in the ventricles. This chain is Gap junction alpha-1 protein (GJA1), found in Macaca fascicularis (Crab-eating macaque).